A 106-amino-acid polypeptide reads, in one-letter code: ATP-dependent Clp protease adapter protein ClpS (106 aa).

The span at 1–10 (MSQKTVHDQD) shows a compositional bias: basic and acidic residues. The interval 1 to 22 (MSQKTVHDQDNALLLETGNTKV) is disordered.

It belongs to the ClpS family. As to quaternary structure, binds to the N-terminal domain of the chaperone ClpA.

Involved in the modulation of the specificity of the ClpAP-mediated ATP-dependent protein degradation. The sequence is that of ATP-dependent Clp protease adapter protein ClpS from Xylella fastidiosa (strain 9a5c).